The following is a 1186-amino-acid chain: Pesticidal crystal protein Cry14Aa (1186 aa).

It belongs to the delta endotoxin family.

In terms of biological role, promotes colloidosmotic lysis by binding to the midgut epithelial cells of insects. This chain is Pesticidal crystal protein Cry14Aa (cry14Aa), found in Bacillus thuringiensis subsp. sotto.